Reading from the N-terminus, the 330-residue chain is Aspartate--ammonia ligase (330 aa).

This sequence belongs to the class-II aminoacyl-tRNA synthetase family. AsnA subfamily.

The protein localises to the cytoplasm. The catalysed reaction is L-aspartate + NH4(+) + ATP = L-asparagine + AMP + diphosphate + H(+). It functions in the pathway amino-acid biosynthesis; L-asparagine biosynthesis; L-asparagine from L-aspartate (ammonia route): step 1/1. This chain is Aspartate--ammonia ligase, found in Haemophilus influenzae (strain 86-028NP).